We begin with the raw amino-acid sequence, 492 residues long: Glutamyl-tRNA(Gln) amidotransferase subunit A (492 aa).

Active-site charge relay system residues include Lys78 and Ser158. Catalysis depends on Ser182, which acts as the Acyl-ester intermediate.

Belongs to the amidase family. GatA subfamily. As to quaternary structure, heterotrimer of A, B and C subunits.

It catalyses the reaction L-glutamyl-tRNA(Gln) + L-glutamine + ATP + H2O = L-glutaminyl-tRNA(Gln) + L-glutamate + ADP + phosphate + H(+). Its function is as follows. Allows the formation of correctly charged Gln-tRNA(Gln) through the transamidation of misacylated Glu-tRNA(Gln) in organisms which lack glutaminyl-tRNA synthetase. The reaction takes place in the presence of glutamine and ATP through an activated gamma-phospho-Glu-tRNA(Gln). The chain is Glutamyl-tRNA(Gln) amidotransferase subunit A from Orientia tsutsugamushi (strain Ikeda) (Rickettsia tsutsugamushi).